The following is a 242-amino-acid chain: ATP synthase subunit a (242 aa).

6 consecutive transmembrane segments (helical) span residues 29–49 (SAVA…TAFV), 84–104 (FFPL…LGMV), 114–134 (IIVT…YGIY), 140–160 (FFSL…MVII), 181–201 (VAGH…TWLF), and 206–226 (IALV…QAYI).

It belongs to the ATPase A chain family. In terms of assembly, F-type ATPases have 2 components, CF(1) - the catalytic core - and CF(0) - the membrane proton channel. CF(1) has five subunits: alpha(3), beta(3), gamma(1), delta(1), epsilon(1). CF(0) has three main subunits: a(1), b(2) and c(9-12). The alpha and beta chains form an alternating ring which encloses part of the gamma chain. CF(1) is attached to CF(0) by a central stalk formed by the gamma and epsilon chains, while a peripheral stalk is formed by the delta and b chains.

The protein resides in the cell inner membrane. Its function is as follows. Key component of the proton channel; it plays a direct role in the translocation of protons across the membrane. In Orientia tsutsugamushi (strain Ikeda) (Rickettsia tsutsugamushi), this protein is ATP synthase subunit a.